The following is a 500-amino-acid chain: Mucin-like protein 3 (500 aa).

Residues 1–27 form the signal peptide; it reads MAQPTSGLYSTFGFFICLLFFPASWEA. Residues 28-429 lie on the Extracellular side of the membrane; it reads GANTFQELQK…GENNSFPVWA (402 aa). Disordered stretches follow at residues 55–198 and 275–324; these read THRA…SQKP and EGKT…PTAS. The span at 58 to 71 shows a compositional bias: basic and acidic residues; sequence ASSDQKTSRQHPPD. The span at 76–89 shows a compositional bias: polar residues; it reads TATQKAKNQCNTTR. The N-linked (GlcNAc...) asparagine glycan is linked to N108. Composition is skewed to basic and acidic residues over residues 111-123 and 132-142; these read VRHE…EKDL and ARNERSADDPR. N148 carries an N-linked (GlcNAc...) asparagine glycan. Composition is skewed to polar residues over residues 159 to 178, 279 to 289, and 298 to 324; these read PRRN…TTKS, SPASESSSQAQ, and TSAS…PTAS. The chain crosses the membrane as a helical span at residues 430–450; it reads IVIVILMAVIILLVFIGLILL. Over 451–500 the chain is Cytoplasmic; it reads VSCASRARHVLTQNSEEPEPQPEDKGSRNSYPVYLMEQQNLNLNQIPSPP.

The protein localises to the cell membrane. It is found in the cytoplasm. In terms of biological role, may modulate NF-kappaB signaling and play a role in cell growth. The protein is Mucin-like protein 3 of Mus musculus (Mouse).